Consider the following 270-residue polypeptide: Urease accessory protein UreD (270 aa).

The protein belongs to the UreD family. As to quaternary structure, ureD, UreF and UreG form a complex that acts as a GTP-hydrolysis-dependent molecular chaperone, activating the urease apoprotein by helping to assemble the nickel containing metallocenter of UreC. The UreE protein probably delivers the nickel.

Its subcellular location is the cytoplasm. Functionally, required for maturation of urease via the functional incorporation of the urease nickel metallocenter. The sequence is that of Urease accessory protein UreD from Actinobacillus pleuropneumoniae serotype 7 (strain AP76).